The chain runs to 354 residues: 3-dehydroquinate synthase (354 aa).

NAD(+) contacts are provided by residues Gly-106–Asp-110, Thr-130–Ser-131, Lys-143, and Lys-152. Residues Glu-185, His-246, and His-262 each contribute to the Zn(2+) site.

The protein belongs to the sugar phosphate cyclases superfamily. Dehydroquinate synthase family. Co(2+) serves as cofactor. Zn(2+) is required as a cofactor. Requires NAD(+) as cofactor.

It is found in the cytoplasm. The enzyme catalyses 7-phospho-2-dehydro-3-deoxy-D-arabino-heptonate = 3-dehydroquinate + phosphate. The protein operates within metabolic intermediate biosynthesis; chorismate biosynthesis; chorismate from D-erythrose 4-phosphate and phosphoenolpyruvate: step 2/7. Functionally, catalyzes the conversion of 3-deoxy-D-arabino-heptulosonate 7-phosphate (DAHP) to dehydroquinate (DHQ). The protein is 3-dehydroquinate synthase of Leuconostoc mesenteroides subsp. mesenteroides (strain ATCC 8293 / DSM 20343 / BCRC 11652 / CCM 1803 / JCM 6124 / NCDO 523 / NBRC 100496 / NCIMB 8023 / NCTC 12954 / NRRL B-1118 / 37Y).